A 250-amino-acid chain; its full sequence is Uracil-DNA glycosylase (250 aa).

Residue D78 is the Proton acceptor of the active site. The disordered stretch occupies residues R228–L250.

This sequence belongs to the uracil-DNA glycosylase (UDG) superfamily. UNG family.

It localises to the cytoplasm. It catalyses the reaction Hydrolyzes single-stranded DNA or mismatched double-stranded DNA and polynucleotides, releasing free uracil.. Excises uracil residues from the DNA which can arise as a result of misincorporation of dUMP residues by DNA polymerase or due to deamination of cytosine. This is Uracil-DNA glycosylase from Bordetella parapertussis (strain 12822 / ATCC BAA-587 / NCTC 13253).